The chain runs to 271 residues: MNIMSEAAVEKALDQKMNTVPYKMIGNDVSVYYGEKRALFDVNLNIRENTVTALIGPSGCGKSTFLRTLNRMNDTIENCRVTGKITLDEDDIYDPSIDVVELRARVGMVFQKPNPFPKSIYDNVSYGPRIHGLARTKAELDEVVETSLQKAGLWNEVKDRLQEPGTGLSGGQQQRLCIARAVAVSPEVILMDEPCSALDPIATAKVEELIHELRANFTIVIVTHSMQQAARVSQRTAMFHLGNLVEENDTDKMFTNPDDQRTQDYIMGRFG.

Positions 24–266 (MIGNDVSVYY…PDDQRTQDYI (243 aa)) constitute an ABC transporter domain. ATP is bound at residue 56 to 63 (GPSGCGKS).

It belongs to the ABC transporter superfamily. Phosphate importer (TC 3.A.1.7) family. The complex is composed of two ATP-binding proteins (PstB), two transmembrane proteins (PstC and PstA) and a solute-binding protein (PstS).

Its subcellular location is the cell inner membrane. The enzyme catalyses phosphate(out) + ATP + H2O = ADP + 2 phosphate(in) + H(+). In terms of biological role, part of the ABC transporter complex PstSACB involved in phosphate import. Responsible for energy coupling to the transport system. This is Phosphate import ATP-binding protein PstB from Rhizobium meliloti (strain 1021) (Ensifer meliloti).